Consider the following 187-residue polypeptide: Shikimate kinase (187 aa).

Residue 14-19 (TSGKST) coordinates ATP. S18 contributes to the Mg(2+) binding site. Residues D36, R60, and G82 each contribute to the substrate site. Residue R120 participates in ATP binding. R147 contacts substrate.

This sequence belongs to the shikimate kinase family. As to quaternary structure, monomer. Requires Mg(2+) as cofactor.

The protein resides in the cytoplasm. It catalyses the reaction shikimate + ATP = 3-phosphoshikimate + ADP + H(+). It functions in the pathway metabolic intermediate biosynthesis; chorismate biosynthesis; chorismate from D-erythrose 4-phosphate and phosphoenolpyruvate: step 5/7. Catalyzes the specific phosphorylation of the 3-hydroxyl group of shikimic acid using ATP as a cosubstrate. The protein is Shikimate kinase of Chloroherpeton thalassium (strain ATCC 35110 / GB-78).